A 173-amino-acid chain; its full sequence is Phosphopantetheine adenylyltransferase (173 aa).

Thr-9 serves as a coordination point for substrate. ATP is bound by residues Thr-9–Phe-10 and His-17. Residues Lys-41, Thr-75, and Arg-89 each contribute to the substrate site. ATP contacts are provided by residues Gly-90 to Arg-92, Glu-100, and His-125 to Ser-131.

The protein belongs to the bacterial CoaD family. Homohexamer. It depends on Mg(2+) as a cofactor.

The protein localises to the cytoplasm. It catalyses the reaction (R)-4'-phosphopantetheine + ATP + H(+) = 3'-dephospho-CoA + diphosphate. It participates in cofactor biosynthesis; coenzyme A biosynthesis; CoA from (R)-pantothenate: step 4/5. Its function is as follows. Reversibly transfers an adenylyl group from ATP to 4'-phosphopantetheine, yielding dephospho-CoA (dPCoA) and pyrophosphate. The protein is Phosphopantetheine adenylyltransferase of Methylacidiphilum infernorum (isolate V4) (Methylokorus infernorum (strain V4)).